The following is an 85-amino-acid chain: Toxin BmKaIT1 (85 aa).

The first 19 residues, 1–19, serve as a signal peptide directing secretion; it reads MNYLVMISFAFLLMTGVES. An LCN-type CS-alpha/beta domain is found at 21 to 83; sequence RDAYIAQNYN…VPIRVPGKCH (63 aa). 4 cysteine pairs are disulfide-bonded: cysteine 31–cysteine 82, cysteine 35–cysteine 55, cysteine 41–cysteine 65, and cysteine 45–cysteine 67. Residues 84-85 constitute a propeptide, removed by a carboxypeptidase; it reads RR.

The protein belongs to the long (4 C-C) scorpion toxin superfamily. Sodium channel inhibitor family. Alpha subfamily. In terms of tissue distribution, expressed by the venom gland.

The protein resides in the secreted. Its function is as follows. Alpha toxins bind voltage-independently at site-3 of sodium channels (Nav) and inhibit the inactivation of the activated channels, thereby blocking neuronal transmission. Shows a high toxicity toward insects and moderate toxicity against mammals. The protein is Toxin BmKaIT1 of Olivierus martensii (Manchurian scorpion).